We begin with the raw amino-acid sequence, 185 residues long: Elongation factor P (185 aa).

It belongs to the elongation factor P family.

It is found in the cytoplasm. It functions in the pathway protein biosynthesis; polypeptide chain elongation. Involved in peptide bond synthesis. Stimulates efficient translation and peptide-bond synthesis on native or reconstituted 70S ribosomes in vitro. Probably functions indirectly by altering the affinity of the ribosome for aminoacyl-tRNA, thus increasing their reactivity as acceptors for peptidyl transferase. This Dictyoglomus turgidum (strain DSM 6724 / Z-1310) protein is Elongation factor P.